The following is a 93-amino-acid chain: Small ribosomal subunit protein uS19 (93 aa).

Residues 73–93 (EFSPTRTFRGHVKDDRKSKRR) form a disordered region. The span at 83 to 93 (HVKDDRKSKRR) shows a compositional bias: basic and acidic residues.

It belongs to the universal ribosomal protein uS19 family.

Its function is as follows. Protein S19 forms a complex with S13 that binds strongly to the 16S ribosomal RNA. The protein is Small ribosomal subunit protein uS19 of Streptomyces coelicolor (strain ATCC BAA-471 / A3(2) / M145).